We begin with the raw amino-acid sequence, 229 residues long: Auxin-responsive protein IAA17 (229 aa).

The EAR-like (transcriptional repression) motif lies at 14–18; it reads LCLGL. The PB1 domain occupies 110–211; it reads AAFVKVSMDG…TCKRLRLMKG (102 aa).

The protein belongs to the Aux/IAA family. As to quaternary structure, homodimers and heterodimers. Interacts with the auxin response factors ARF1 and IAA24. Interacts with IAA1. Interacts with TPL. Interacts (via PB1 domain) with ARF7 (via PB1 domain). In terms of processing, phosphorylated by phytochrome A in vitro.

Its subcellular location is the nucleus. In terms of biological role, aux/IAA proteins are short-lived transcriptional factors that function as repressors of early auxin response genes at low auxin concentrations. Repression is thought to result from the interaction with auxin response factors (ARFs), proteins that bind to the auxin-responsive promoter element (AuxRE). Formation of heterodimers with ARF proteins may alter their ability to modulate early auxin response genes expression. This is Auxin-responsive protein IAA17 (IAA17) from Arabidopsis thaliana (Mouse-ear cress).